Reading from the N-terminus, the 138-residue chain is ATP synthase epsilon chain (138 aa).

This sequence belongs to the ATPase epsilon chain family. F-type ATPases have 2 components, CF(1) - the catalytic core - and CF(0) - the membrane proton channel. CF(1) has five subunits: alpha(3), beta(3), gamma(1), delta(1), epsilon(1). CF(0) has three main subunits: a, b and c.

The protein resides in the cell inner membrane. Functionally, produces ATP from ADP in the presence of a proton gradient across the membrane. This Polynucleobacter necessarius subsp. necessarius (strain STIR1) protein is ATP synthase epsilon chain.